A 312-amino-acid chain; its full sequence is MPFAPSLLSSSSSVSQFLPRFPNATRFNVTPRSRAATVVAASVTDLAGVDSTTIAVLGGGSVAALAAMVSLTDPERRRKLQAEEVGGGDKEVVREYFNSTGFERWRKIYGETDEVNRVQKDIRLGHAKTVENTMLMLTEDRSLAGVTVCDAGCGTGLLSIPLAKEGAIVSASDISAAMVAEAEMKAKAQLPSENLPKFEVNDLESLTGKYDTVVCLDVLIHYPQNKADGMIAHLASLAEKRVILSFAPKTFYYDILKRIGELFPGPSKATRAYLHSEADVERALGKVGWKISKRGLTTTQFYFSRLIEAVPM.

The N-terminal 39 residues, Met1 to Val39, are a transit peptide targeting the chloroplast.

The protein belongs to the class I-like SAM-binding methyltransferase superfamily. Magnesium protoporphyrin O-methyltransferase family.

It is found in the plastid. Its subcellular location is the chloroplast membrane. The protein localises to the chloroplast thylakoid membrane. It catalyses the reaction Mg-protoporphyrin IX + S-adenosyl-L-methionine = Mg-protoporphyrin IX 13-monomethyl ester + S-adenosyl-L-homocysteine. Its pathway is porphyrin-containing compound metabolism; chlorophyll biosynthesis. Its activity is regulated as follows. Regulated by the folate status via an increased concentration of S-adenosyl-homocysteine (AdoHcy), a potent inhibitor of most AdoMet-dependent methyltransferases. Converts Mg-protoporphyrin IX to Mg-protoporphyrin IX methylester using S-adenosyl-L-methionine as a cofactor. Involved in chloroplast-to-nucleus signaling by acting as a negative effector of nuclear photosynthetic gene expression. The sequence is that of Magnesium protoporphyrin IX methyltransferase, chloroplastic (CHLM) from Arabidopsis thaliana (Mouse-ear cress).